A 225-amino-acid chain; its full sequence is Single-pass membrane and coiled-coil domain-containing protein 3 (225 aa).

Positions 69-92 (IIQAMTKIQKELQKIDEALKDQLE) form a coiled coil. A helical membrane pass occupies residues 155-175 (IGTSLLGSIGVAVLSLGIDMI). A coiled-coil region spans residues 182–209 (AVERTQLQAAIKSYEKHLEEFKAASAKY).

It is found in the membrane. This chain is Single-pass membrane and coiled-coil domain-containing protein 3 (Smco3), found in Mus musculus (Mouse).